The primary structure comprises 348 residues: NADH-cytochrome b5 reductase 2 (348 aa).

The helical transmembrane segment at 41–61 (TLLYGAAAAAVAGAGYYFLGG) threads the bilayer. The FAD-binding FR-type domain occupies 97–202 (QGWVSLKLEE…KGPLPKYPWT (106 aa)). 205-240 (KHGHIALVAGGTGITPMFQLCRAIFNNPDDQTKVTL) lines the FAD pocket.

This sequence belongs to the flavoprotein pyridine nucleotide cytochrome reductase family. Requires FAD as cofactor.

Its subcellular location is the mitochondrion outer membrane. It catalyses the reaction 2 Fe(III)-[cytochrome b5] + NADH = 2 Fe(II)-[cytochrome b5] + NAD(+) + H(+). May mediate the reduction of outer membrane cytochrome b5. In Chaetomium globosum (strain ATCC 6205 / CBS 148.51 / DSM 1962 / NBRC 6347 / NRRL 1970) (Soil fungus), this protein is NADH-cytochrome b5 reductase 2 (MCR1).